A 128-amino-acid polypeptide reads, in one-letter code: Sulfurtransferase TusD (128 aa).

The Cysteine persulfide intermediate role is filled by cysteine 78.

The protein belongs to the DsrE/TusD family. In terms of assembly, heterohexamer, formed by a dimer of trimers. The hexameric TusBCD complex contains 2 copies each of TusB, TusC and TusD. The TusBCD complex interacts with TusE.

The protein resides in the cytoplasm. In terms of biological role, part of a sulfur-relay system required for 2-thiolation of 5-methylaminomethyl-2-thiouridine (mnm(5)s(2)U) at tRNA wobble positions. Accepts sulfur from TusA and transfers it in turn to TusE. This chain is Sulfurtransferase TusD, found in Escherichia coli O127:H6 (strain E2348/69 / EPEC).